A 639-amino-acid chain; its full sequence is Protein artemis (639 aa).

Disordered regions lie at residues 450 to 496, 515 to 570, and 590 to 617; these read MDCT…LTSS, SELE…SQVD, and EAAE…VPQP. The span at 454–466 shows a compositional bias: acidic residues; it reads ESNDDDDDEDDAA. Over residues 518 to 537 the composition is skewed to polar residues; sequence ENSQNTQTLSTENTASQSPE. Over residues 548-560 the composition is skewed to low complexity; the sequence is VHMSSSQSTHISD.

This sequence belongs to the DNA repair metallo-beta-lactamase (DRMBL) family.

Its subcellular location is the nucleus. May have a role in the processing of DNA double strand breaks (DSBs) prior to their repair by the non homologous end joining (NHEJ) pathway. Probably exhibits both exonuclease and endonuclease activity. This is Protein artemis (dclre1c) from Danio rerio (Zebrafish).